Here is a 259-residue protein sequence, read N- to C-terminus: L-arginine-binding protein (259 aa).

Residues 1-21 form the signal peptide; the sequence is MKKLALLGALALSVLSLPTFA.

It belongs to the bacterial solute-binding protein 3 family.

The protein localises to the periplasm. Its function is as follows. Binds L-arginine with high affinity. Shows no measurable affinity for L-ornithine. In Pseudomonas aeruginosa (strain ATCC 15692 / DSM 22644 / CIP 104116 / JCM 14847 / LMG 12228 / 1C / PRS 101 / PAO1), this protein is L-arginine-binding protein.